The sequence spans 523 residues: GMP synthase [glutamine-hydrolyzing] (523 aa).

One can recognise a Glutamine amidotransferase type-1 domain in the interval 8–205 (KILILDFGSQ…VENICGCARS (198 aa)). Residue Cys85 is the Nucleophile of the active site. Residues His179 and Glu181 contribute to the active site. Positions 206 to 398 (WTPENIIEDA…LGLPAEMLNR (193 aa)) constitute a GMPS ATP-PPase domain. 233-239 (SGGVDSS) is a binding site for ATP.

Homodimer.

The catalysed reaction is XMP + L-glutamine + ATP + H2O = GMP + L-glutamate + AMP + diphosphate + 2 H(+). The protein operates within purine metabolism; GMP biosynthesis; GMP from XMP (L-Gln route): step 1/1. In terms of biological role, catalyzes the synthesis of GMP from XMP. The protein is GMP synthase [glutamine-hydrolyzing] of Haemophilus ducreyi (strain 35000HP / ATCC 700724).